A 167-amino-acid chain; its full sequence is Neutrophilic granule protein (167 aa).

Positions 1-21 (MAGLWKTFVLVVALAVVSCEA) are cleaved as a signal peptide. Residues 122–141 (EDTQETSFNDKQDVSEKEKF) are disordered.

Belongs to the cathelicidin family. Monomer. Homodimer; disulfide-linked. Expressed in myeloid bone marrow cells. Expressed in neutrophilic precursors (at protein level). Expressed in myeloid bone marrow cells.

It localises to the secreted. The protein localises to the cytoplasmic granule. Its function is as follows. Acts as an inhibitor of cathepsin B (CTSB) activity. Plays a role as a negative regulator of tumor vascular development, cell invasion and metastasis. The sequence is that of Neutrophilic granule protein from Mus musculus (Mouse).